The chain runs to 197 residues: Xanthine phosphoribosyltransferase (197 aa).

Xanthine-binding residues include Leu20 and Asn27. 128–132 (ANGQA) lines the 5-phospho-alpha-D-ribose 1-diphosphate pocket. Residue Lys156 coordinates xanthine.

Belongs to the purine/pyrimidine phosphoribosyltransferase family. Xpt subfamily. Homodimer.

It localises to the cytoplasm. The enzyme catalyses XMP + diphosphate = xanthine + 5-phospho-alpha-D-ribose 1-diphosphate. Its pathway is purine metabolism; XMP biosynthesis via salvage pathway; XMP from xanthine: step 1/1. In terms of biological role, converts the preformed base xanthine, a product of nucleic acid breakdown, to xanthosine 5'-monophosphate (XMP), so it can be reused for RNA or DNA synthesis. The protein is Xanthine phosphoribosyltransferase of Bacillus anthracis (strain A0248).